Consider the following 434-residue polypeptide: Glutamate-1-semialdehyde 2,1-aminomutase (434 aa).

Lysine 265 bears the N6-(pyridoxal phosphate)lysine mark.

The protein belongs to the class-III pyridoxal-phosphate-dependent aminotransferase family. HemL subfamily. As to quaternary structure, homodimer. Pyridoxal 5'-phosphate serves as cofactor.

The protein resides in the cytoplasm. The enzyme catalyses (S)-4-amino-5-oxopentanoate = 5-aminolevulinate. It participates in porphyrin-containing compound metabolism; protoporphyrin-IX biosynthesis; 5-aminolevulinate from L-glutamyl-tRNA(Glu): step 2/2. The protein is Glutamate-1-semialdehyde 2,1-aminomutase of Ruminiclostridium cellulolyticum (strain ATCC 35319 / DSM 5812 / JCM 6584 / H10) (Clostridium cellulolyticum).